We begin with the raw amino-acid sequence, 405 residues long: Argininosuccinate synthase (405 aa).

ATP is bound by residues 10–18 (AYSGGLDTS) and alanine 37. Residues tyrosine 88 and serine 93 each coordinate L-citrulline. Residue glycine 118 coordinates ATP. Threonine 120, asparagine 124, and aspartate 125 together coordinate L-aspartate. Asparagine 124 lines the L-citrulline pocket. L-citrulline-binding residues include arginine 128, serine 179, serine 188, glutamate 264, and tyrosine 276.

This sequence belongs to the argininosuccinate synthase family. Type 1 subfamily. Homotetramer.

The protein localises to the cytoplasm. It catalyses the reaction L-citrulline + L-aspartate + ATP = 2-(N(omega)-L-arginino)succinate + AMP + diphosphate + H(+). It participates in amino-acid biosynthesis; L-arginine biosynthesis; L-arginine from L-ornithine and carbamoyl phosphate: step 2/3. In Nitrosococcus oceani (strain ATCC 19707 / BCRC 17464 / JCM 30415 / NCIMB 11848 / C-107), this protein is Argininosuccinate synthase.